We begin with the raw amino-acid sequence, 386 residues long: Homeobox protein Hox-A13 (386 aa).

Positions 320–379 (GRKKRVPYTKVQLKELEREYATNKFITKDKRRRISATTNLSERQVTIWFQNRRVKEKKVI) form a DNA-binding region, homeobox.

It belongs to the Abd-B homeobox family. Binds DNA as a homodimer. Interacts with MEIS1, MEIS2 and MEIS3.

The protein resides in the nucleus. In terms of biological role, sequence-specific, AT-rich binding transcription factor which is part of a developmental regulatory system that provides cells with specific positional identities on the anterior-posterior axis. This chain is Homeobox protein Hox-A13 (Hoxa13), found in Mus musculus (Mouse).